Reading from the N-terminus, the 163-residue chain is Leptin (163 aa).

The signal sequence occupies residues M1–A18. The cysteines at positions 113 and 163 are disulfide-linked.

This sequence belongs to the leptin family. In terms of tissue distribution, not exclusively localized in adipose tissue but is also expressed in liver.

It is found in the secreted. Functionally, key player in the regulation of energy balance and body weight control. Once released into the circulation, has central and peripheral effects by binding LEPR, found in many tissues, which results in the activation of several major signaling pathways. The protein is Leptin (LEP) of Gallus gallus (Chicken).